The sequence spans 585 residues: Zinc finger protein 614 (585 aa).

The KRAB domain occupies 8 to 79; that stretch reads LTLEDVAVEF…DAKIQNKNCP (72 aa). The segment at 205 to 227 adopts a C2H2-type 1; atypical zinc-finger fold; sequence HACIECEQTFLRKSQLIYHENIC. A C2H2-type 2; degenerate zinc finger spans residues 257–281; sequence KICIPNEYRKGSTVKSSLITHQQTH. 10 C2H2-type zinc fingers span residues 287-309, 315-337, 343-365, 371-393, 399-421, 427-449, 455-477, 483-505, 511-533, and 539-561; these read YMCSECGKGFTMKRYLIAHQRTH, YVCKECGKGFTVKSNLIVHQRTH, YICSECGKGFTMKRYLVVHQRTH, YMCSECGKGFTVKSNLIVHQRSH, YICSECGKGFTVKRTLVIHQRTH, YICNECGKGFTTKRTLIIHQRTH, YECNECGKAFSQKICLIQHERCH, FVCTECGKSYSHKYGLITHQRIH, YECNECGKAFTTKSVLNVHQRTH, and YGCSDCEKAFSHLSNLVKHKKMH.

Belongs to the krueppel C2H2-type zinc-finger protein family.

The protein resides in the nucleus. May be involved in transcriptional regulation. The chain is Zinc finger protein 614 (ZNF614) from Homo sapiens (Human).